Reading from the N-terminus, the 96-residue chain is Putative pterin-4-alpha-carbinolamine dehydratase (96 aa).

It belongs to the pterin-4-alpha-carbinolamine dehydratase family.

The enzyme catalyses (4aS,6R)-4a-hydroxy-L-erythro-5,6,7,8-tetrahydrobiopterin = (6R)-L-erythro-6,7-dihydrobiopterin + H2O. In Prochlorococcus marinus (strain MIT 9301), this protein is Putative pterin-4-alpha-carbinolamine dehydratase.